A 250-amino-acid chain; its full sequence is 5-oxoprolinase subunit A (250 aa).

This sequence belongs to the LamB/PxpA family. In terms of assembly, forms a complex composed of PxpA, PxpB and PxpC.

It carries out the reaction 5-oxo-L-proline + ATP + 2 H2O = L-glutamate + ADP + phosphate + H(+). Functionally, catalyzes the cleavage of 5-oxoproline to form L-glutamate coupled to the hydrolysis of ATP to ADP and inorganic phosphate. The polypeptide is 5-oxoprolinase subunit A (Staphylococcus haemolyticus (strain JCSC1435)).